The sequence spans 169 residues: Peptide deformylase (169 aa).

2 residues coordinate Fe cation: Cys-91 and His-133. Glu-134 is an active-site residue. Position 137 (His-137) interacts with Fe cation.

This sequence belongs to the polypeptide deformylase family. The cofactor is Fe(2+).

It catalyses the reaction N-terminal N-formyl-L-methionyl-[peptide] + H2O = N-terminal L-methionyl-[peptide] + formate. Its function is as follows. Removes the formyl group from the N-terminal Met of newly synthesized proteins. Requires at least a dipeptide for an efficient rate of reaction. N-terminal L-methionine is a prerequisite for activity but the enzyme has broad specificity at other positions. This chain is Peptide deformylase, found in Serratia proteamaculans (strain 568).